A 413-amino-acid polypeptide reads, in one-letter code: Hibernation-specific plasma protein HP-55 (413 aa).

The first 24 residues, 1-24 (MPSSISWGLLLLAALSCLGPGSLA), serve as a signal peptide directing secretion. Q25 carries the pyrrolidone carboxylic acid modification. Residues N65, N102, N165, and N266 are each glycosylated (N-linked (GlcNAc...) asparagine). The segment at 368–387 (GGTVLGAEAMLQAPIMKFDR) is RCL.

Belongs to the serpin family. Plasma proteins HP-20, HP-25, HP-27 and HP-55 form a 140 kDa complex via disulfide bonds in the plasma. Post-translationally, the N-terminus is blocked. Plasma; synthesized in the liver.

It is found in the secreted. In terms of biological role, protease inhibitor. The sequence is that of Hibernation-specific plasma protein HP-55 from Tamias sibiricus (Siberian chipmunk).